The sequence spans 448 residues: MASSSCLKQGSVPMNNVCVTPEATYEAVVADPRLFMTSLERLHSLLGTKFMVPIIGGRDLDLHKLFVEVTSRGGINKILNERRWKEVTATFVFPPTATNASYVLRKYYFSLLNNYEQIYFFRSNGQIPPDSMQSPSARPCFIQGAIRPSQELQALTFTPQPKINTAEFLGGSLAGSNVVGVIDGKFESGYLVTVTIGSEQLKGVLYQLLPQNTVSYQTPQQSHGVLPNTLNISANPQGVAGGVTKRRRRRKKSEIKRRDPDHPKPNRSGYNFFFAEQHARLKPLHPGKDRDISRMIGELWNKLNEDEKLIYQGKAMEDKERYRTEMEDYREKKKNGQLISNAVPLQQRLPEQNVDMAEADLPIDEVEEDDEEGDSSGSSGESEPHDDQSIETDPELEEPSLNPSGPNLNPNPTEIVVAPKEKNGDVVMETSPLKKADEPTVAVTAEQN.

Residues 29 to 120 (VADPRLFMTS…LLNNYEQIYF (92 aa)) enclose the ARID domain. Residues 219-236 (PQQSHGVLPNTLNISANP) show a composition bias toward polar residues. 3 disordered regions span residues 219 to 270 (PQQS…RSGY), 333 to 352 (KKNGQLISNAVPLQQRLPEQ), and 366 to 448 (VEED…AEQN). A compositionally biased stretch (basic residues) spans 244-255 (TKRRRRRKKSEI). The segment at residues 263–330 (PKPNRSGYNF…RYRTEMEDYR (68 aa)) is a DNA-binding region (HMG box). A compositionally biased stretch (acidic residues) spans 389 to 398 (SIETDPELEE). A compositionally biased stretch (low complexity) spans 399 to 412 (PSLNPSGPNLNPNP).

The protein belongs to the HMGB family.

It localises to the nucleus. Its function is as follows. Binds preferentially DNA with A/T-rich content. The sequence is that of High mobility group B protein 15 (HMGB15) from Arabidopsis thaliana (Mouse-ear cress).